Consider the following 241-residue polypeptide: Large ribosomal subunit protein uL3 (241 aa).

Gln-157 is subject to N5-methylglutamine.

The protein belongs to the universal ribosomal protein uL3 family. Part of the 50S ribosomal subunit. Forms a cluster with proteins L14 and L19. Methylated by PrmB.

One of the primary rRNA binding proteins, it binds directly near the 3'-end of the 23S rRNA, where it nucleates assembly of the 50S subunit. The chain is Large ribosomal subunit protein uL3 from Vesicomyosocius okutanii subsp. Calyptogena okutanii (strain HA).